Reading from the N-terminus, the 187-residue chain is Large ribosomal subunit protein uL6 (187 aa).

Belongs to the universal ribosomal protein uL6 family. As to quaternary structure, part of the 50S ribosomal subunit.

In terms of biological role, this protein binds to the 23S rRNA, and is important in its secondary structure. It is located near the subunit interface in the base of the L7/L12 stalk, and near the tRNA binding site of the peptidyltransferase center. The sequence is that of Large ribosomal subunit protein uL6 from Roseiflexus castenholzii (strain DSM 13941 / HLO8).